We begin with the raw amino-acid sequence, 200 residues long: ATP synthase subunit s, mitochondrial (200 aa).

The N-terminal 25 residues, 1–25, are a transit peptide targeting the mitochondrion; the sequence is MMPFGKISQQLCGVKKLPWSCDSRY. The segment at 1-61 is N-terminal domain; sequence MMPFGKISQQ…SEWLLRCGAM (61 aa). G59 provides a ligand contact to Mg(2+). LRR repeat units lie at residues 62 to 87, 88 to 116, 117 to 141, and 142 to 173; these read VRYHGQERWQKDYNHLPTGPLDKYKI, QAIDATDSCIMSIGFDHMEGLEHVEKIRL, CKCHYIEDDCLLRLSQLENLQKTIL, and EMEIISCGNITDKGIIALRHLRNLKYLLLSDL. Residue T93 coordinates Mg(2+).

Belongs to the ATP synthase subunit s family. As to quaternary structure, homotetramer. Associates with ATP synthase.

The protein resides in the mitochondrion. The protein localises to the mitochondrion inner membrane. Its function is as follows. Involved in regulation of mitochondrial membrane ATP synthase. Necessary for H(+) conduction of ATP synthase. Facilitates energy-driven catalysis of ATP synthesis by blocking a proton leak through an alternative proton exit pathway. This chain is ATP synthase subunit s, mitochondrial, found in Homo sapiens (Human).